The chain runs to 301 residues: Immune-associated nucleotide-binding protein 5 (301 aa).

One can recognise an AIG1-type G domain in the interval 11–214 (EPVRNIVLVG…FTEENDLNEK (204 aa)). Residues 20-27 (GPTGNGKS) form a G1 region. Residue 20–28 (GPTGNGKSS) coordinates GTP. Residues 46 to 50 (CKTCK) form a G2 region. The segment at 63 to 66 (DTPG) is G3. The G4 stretch occupies residues 133–136 (TGGD). Residues 172–174 (NNK) are G5. Residue N173 participates in GTP binding.

It belongs to the TRAFAC class TrmE-Era-EngA-EngB-Septin-like GTPase superfamily. AIG1/Toc34/Toc159-like paraseptin GTPase family. IAN subfamily. In terms of tissue distribution, expressed in pollen, cotyledons and lateral roots.

This is Immune-associated nucleotide-binding protein 5 from Arabidopsis thaliana (Mouse-ear cress).